The chain runs to 160 residues: Probable chemoreceptor glutamine deamidase CheD 2 (160 aa).

Belongs to the CheD family.

It catalyses the reaction L-glutaminyl-[protein] + H2O = L-glutamyl-[protein] + NH4(+). In terms of biological role, probably deamidates glutamine residues to glutamate on methyl-accepting chemotaxis receptors (MCPs), playing an important role in chemotaxis. The protein is Probable chemoreceptor glutamine deamidase CheD 2 of Geobacter sulfurreducens (strain ATCC 51573 / DSM 12127 / PCA).